The following is a 259-amino-acid chain: DNA adenine methylase (259 aa).

S-adenosyl-L-methionine contacts are provided by residues tyrosine 7, lysine 11, 32 to 37 (FCGGLS), aspartate 50, 156 to 157 (HF), aspartate 171, and tyrosine 181.

Belongs to the N(4)/N(6)-methyltransferase family. In terms of assembly, monomer.

It catalyses the reaction a 2'-deoxyadenosine in DNA + S-adenosyl-L-methionine = an N(6)-methyl-2'-deoxyadenosine in DNA + S-adenosyl-L-homocysteine + H(+). An alpha subtype methylase, recognizes the double-stranded sequence 5'-GATC-3' and methylates A-2. Also acts on 5-hydroxymethylcytosine (hmC)-containing DNA, the normal base in this virus. May prevent degradation of viral DNA by the host restriction-modification antiviral defense system. The chain is DNA adenine methylase from Enterobacteria phage T4 (Bacteriophage T4).